Consider the following 302-residue polypeptide: Putative S-adenosyl-L-methionine-dependent methyltransferase MUL_2961 (302 aa).

Residues Asp128 and 157–158 (DL) contribute to the S-adenosyl-L-methionine site.

The protein belongs to the UPF0677 family.

In terms of biological role, exhibits S-adenosyl-L-methionine-dependent methyltransferase activity. This chain is Putative S-adenosyl-L-methionine-dependent methyltransferase MUL_2961, found in Mycobacterium ulcerans (strain Agy99).